A 264-amino-acid chain; its full sequence is Small ribosomal subunit protein eS1 (264 aa).

The protein belongs to the eukaryotic ribosomal protein eS1 family. As to quaternary structure, component of the small ribosomal subunit. Mature ribosomes consist of a small (40S) and a large (60S) subunit. The 40S subunit contains about 33 different proteins and 1 molecule of RNA (18S). The 60S subunit contains about 49 different proteins and 3 molecules of RNA (25S, 5.8S and 5S).

The protein localises to the cytoplasm. This chain is Small ribosomal subunit protein eS1, found in Babesia bovis.